The chain runs to 184 residues: Ribosome-recycling factor (184 aa).

Belongs to the RRF family.

It localises to the cytoplasm. Its function is as follows. Responsible for the release of ribosomes from messenger RNA at the termination of protein biosynthesis. May increase the efficiency of translation by recycling ribosomes from one round of translation to another. The sequence is that of Ribosome-recycling factor from Aquifex aeolicus (strain VF5).